The sequence spans 491 residues: Tryptophan 5-hydroxylase 2 (491 aa).

Position 19 is a phosphoserine (Ser19). The interval 33-63 (NLTVNKSNSGKNDDKKGNKGSSRSETAPDSG) is disordered. The region spanning 66 to 141 (AVVFSLRNEV…TIVTLNPPEN (76 aa)) is the ACT domain. Residues His319, His324, and Glu364 each contribute to the Fe cation site.

Belongs to the biopterin-dependent aromatic amino acid hydroxylase family. Interacts with DNAJC12. Fe(2+) is required as a cofactor.

It catalyses the reaction (6R)-L-erythro-5,6,7,8-tetrahydrobiopterin + L-tryptophan + O2 = 5-hydroxy-L-tryptophan + (4aS,6R)-4a-hydroxy-L-erythro-5,6,7,8-tetrahydrobiopterin. It participates in aromatic compound metabolism; serotonin biosynthesis; serotonin from L-tryptophan: step 1/2. The sequence is that of Tryptophan 5-hydroxylase 2 (TPH2) from Equus caballus (Horse).